The sequence spans 1055 residues: Sodium/potassium exporting P-type ATPase 1 (1055 aa).

Residues 1-73 are Cytoplasmic-facing; sequence MTPSIGYVDE…GADEKISISK (73 aa). The helical transmembrane segment at 74 to 94 threads the bilayer; sequence ILAHQIFNAMVLVLIISLIIA. Over 95–99 the chain is Extracellular; that stretch reads LAIKD. A helical membrane pass occupies residues 100-120; that stretch reads WISGGVIGFVVFINIFVGFIQ. The Cytoplasmic segment spans residues 121 to 298; it reads ELKAEKTMGS…TNVGTPLQRK (178 aa). The chain crosses the membrane as a helical span at residues 299–319; sequence LSWLAILLFWVAVLFAIVVMA. Topologically, residues 320–328 are extracellular; that stretch reads SQEMRVNRN. Residues 329–349 form a helical membrane-spanning segment; it reads VAIYAICVALSMIPSSLVVVL. The Cytoplasmic segment spans residues 350 to 789; that stretch reads TITMAIGAQV…RMSSNIQKFV (440 aa). Residue D385 is the 4-aspartylphosphate intermediate of the active site. D385 and T387 together coordinate Mg(2+). ATP contacts are provided by T387, E491, K544, R586, T646, G647, D648, R705, and K711. Mg(2+) is bound at residue D730. N733 is a binding site for ATP. The chain crosses the membrane as a helical span at residues 790-810; it reads LQLLAENVAQALYLMIGLAFI. Over 811-816 the chain is Extracellular; it reads DKSGYS. Residues 817–837 form a helical membrane-spanning segment; sequence VFPLSPVEVLWIIVVTSCFPA. The Cytoplasmic segment spans residues 838-866; the sequence is MGLGQEKASHDILEQPPNATIFTWEVIID. Residues 867–887 traverse the membrane as a helical segment; it reads MIAYGFWMAVCCLVCFVCIVY. The Extracellular segment spans residues 888 to 913; it reads GKGDGSLGENCNEGSDTGCNLVFRGR. Residues 914–934 form a helical membrane-spanning segment; that stretch reads SGAFAAFTWCALLLAWECIHL. The Cytoplasmic portion of the chain corresponds to 935 to 962; the sequence is RLSFFKMRPELENPWWKQLAIDLWDNQF. The helical transmembrane segment at 963–983 threads the bilayer; it reads LFWSVMGAIVSVFPVVYIPVI. At 984–990 the chain is on the extracellular side; it reads NNKVFLH. A helical transmembrane segment spans residues 991 to 1011; sequence APIGYEWGLAVAFTILFLIGA. At 1012 to 1055 the chain is on the cytoplasmic side; the sequence is EGWKWFKRVYYRKSNANNPEYDLERNDPFKEYSSFSKSNTMEIV.

Belongs to the cation transport ATPase (P-type) (TC 3.A.3) family. Type IID subfamily. Mg(2+) is required as a cofactor. In terms of processing, the active site is phosphorylated in presence of sodium or potassium and in conditions of higher pH. Not phosphorylated in presence of calcium ions.

The protein resides in the cell membrane. It carries out the reaction Na(+)(in) + ATP + H2O = Na(+)(out) + ADP + phosphate + H(+). The enzyme catalyses K(+)(in) + ATP + H2O = K(+)(out) + ADP + phosphate + H(+). Its function is as follows. Catalyzes the hydrolysis of ATP coupled with the export of sodium and potassium from the cell. May be an inefficient potassium exporter. May transport other cations such as lithium. Sodium/potassium efflux ATPases are involved in salt tolerance and maintaining the membrane potential across the plasma membrane in high salinity (Na+) or alkaline (K+) environments. In Schwanniomyces occidentalis (Yeast), this protein is Sodium/potassium exporting P-type ATPase 1.